We begin with the raw amino-acid sequence, 94 residues long: Lipolysis-activating peptide 1-beta chain (94 aa).

The N-terminal stretch at 1 to 19 (MKILAVVLISVIVLNTANG) is a signal peptide. One can recognise an LCN-type CS-alpha/beta domain in the interval 20–87 (ENYYPQKYTN…FFNALESQCP (68 aa)). Cystine bridges form between Cys34/Cys56, Cys42/Cys66, and Cys46/Cys68.

Belongs to the long (3 C-C) scorpion toxin superfamily. Homodimer; disulfide-linked or monomer (edited version) or heterodimer of an alpha chain (AC D9U299 or AC D9U2A4) and this beta chain (non-edited version). Expressed by the venom gland.

It localises to the secreted. Functionally, the homodimer inhibits HMG-CoA reductase (HMGCR) (32% of inhibition produced by 0.6 uM), a glycoprotein involved in the control of cholesterol biosynthesis. The inhibitory effects of bumarsin are seen at much lower concentrations (0.6 uM) than that for statins such as atorvastatin (5 mM) and simvastatin (10 uM). In addition to inhibition of HMG-CoA reductase, this protein lowers cholesterol levels by inducing steroid hormone synthesis via StAR, and by increasing reverse cholesterol transport mediated by the induction of ABCA1 and APOA1. The heterodimer non-edited LVP1 induces lipolysis in rat adipocytes. Induction of lipolysis by LVP1 appears to be mediated through the beta-2 adrenergic receptor pathway (ADRB2). Its function is as follows. The monomer edited version, similar to alpha-toxins, may modulate voltage-gated sodium channels (Nav) and may block voltage-gated potassium channels (Kv). This is Lipolysis-activating peptide 1-beta chain from Lychas mucronatus (Chinese swimming scorpion).